Here is a 669-residue protein sequence, read N- to C-terminus: Protein adenylyltransferase SelO, mitochondrial (669 aa).

A mitochondrion-targeting transit peptide spans 1 to 115; the sequence is MAVYRAALGA…LGLGAPPARE (115 aa). The ATP site is built by Gly-153, Gly-155, Lys-176, Asp-188, Gly-189, Arg-246, and Arg-253. The active-site Proton acceptor is the Asp-338. Positions 339 and 348 each coordinate Mg(2+). Asp-348 serves as a coordination point for ATP. The segment at 634–654 is disordered; it reads ATDAEATEADGADGRQRSYSS. A Phosphothreonine modification is found at Thr-635. Phosphoserine is present on Ser-653. Position 667 (Sec-667) is a non-standard amino acid, selenocysteine.

The protein belongs to the SELO family. It depends on Mg(2+) as a cofactor.

The protein resides in the mitochondrion. The catalysed reaction is L-tyrosyl-[protein] + ATP = O-(5'-adenylyl)-L-tyrosyl-[protein] + diphosphate. It catalyses the reaction L-threonyl-[protein] + ATP = 3-O-(5'-adenylyl)-L-threonyl-[protein] + diphosphate. The enzyme catalyses L-seryl-[protein] + ATP = 3-O-(5'-adenylyl)-L-seryl-[protein] + diphosphate. Catalyzes the transfer of adenosine 5'-monophosphate (AMP) to Ser, Thr and Tyr residues of target proteins (AMPylation). May be a redox-active mitochondrial selenoprotein which interacts with a redox target protein. This Homo sapiens (Human) protein is Protein adenylyltransferase SelO, mitochondrial.